The sequence spans 392 residues: Protein FAM53C (392 aa).

The residue at position 1 (M1) is an N-acetylmethionine. Positions 76–120 (LHLRPPSPGSSPQEQSLSQVLSPEPPDPEKLPVPPAPPSKRHCRS) are disordered. Positions 85 to 97 (SSPQEQSLSQVLS) are enriched in low complexity. S122 and S162 each carry phosphoserine. Disordered stretches follow at residues 141-167 (LWTPIKHRGSGGGGGPQVPHQSPPKRV) and 201-294 (DSSH…EDPR). Positions 201 to 215 (DSSHPSAASPQSGSW) are enriched in polar residues. A phosphoserine mark is found at S232, S234, S255, and S273. A compositionally biased stretch (low complexity) spans 241–256 (ASRFLPSARSSPASSP). Residues 278–294 (LDARKAGVKRRHEEDPR) are compositionally biased toward basic and acidic residues. S299 bears the Phosphoserine mark.

The protein belongs to the FAM53 family.

The chain is Protein FAM53C from Bos taurus (Bovine).